The chain runs to 458 residues: Enolase (458 aa).

Q177 provides a ligand contact to (2R)-2-phosphoglycerate. The Proton donor role is filled by E219. Mg(2+) contacts are provided by D256, E310, and D337. (2R)-2-phosphoglycerate-binding residues include K362, R391, S392, and K413. The active-site Proton acceptor is K362.

The protein belongs to the enolase family. The cofactor is Mg(2+).

It is found in the cytoplasm. The protein resides in the secreted. The protein localises to the cell surface. The enzyme catalyses (2R)-2-phosphoglycerate = phosphoenolpyruvate + H2O. It participates in carbohydrate degradation; glycolysis; pyruvate from D-glyceraldehyde 3-phosphate: step 4/5. Its function is as follows. Catalyzes the reversible conversion of 2-phosphoglycerate (2-PG) into phosphoenolpyruvate (PEP). It is essential for the degradation of carbohydrates via glycolysis. The protein is Enolase of Mycoplasma genitalium (strain ATCC 33530 / DSM 19775 / NCTC 10195 / G37) (Mycoplasmoides genitalium).